A 1025-amino-acid polypeptide reads, in one-letter code: DNA ligase 4 (1025 aa).

Residues 1-36 are disordered; sequence MMQPTPAPSSAPGSPQRTQAEPEMETPSYPQPPQNV. ATP is bound by residues glutamate 289, lysine 291, leucine 292, arginine 296, glutamate 349, phenylalanine 387, glutamate 447, lysine 452, lysine 469, and lysine 471. The active-site N6-AMP-lysine intermediate is lysine 291. Glutamate 349 serves as a coordination point for Mg(2+). Glutamate 447 contacts Mg(2+). In terms of domain architecture, BRCT 1 spans 667–763; the sequence is VKTDIFNGMK…EPAPFKKKYF (97 aa). The tract at residues 773–904 is disordered; the sequence is ADEYNEDDGE…TTPDVDGDVK (132 aa). 2 stretches are compositionally biased toward acidic residues: residues 775–785 and 806–816; these read EYNEDDGEEEG and SETEDEDEEQA. The segment covering 817-838 has biased composition (basic and acidic residues); that stretch reads PEIKEEQDGELHEWLKVDDRKS. Positions 845 to 870 are enriched in acidic residues; it reads DEEDSVTEDDSDNADVADEEEPDLDD. The span at 891-904 shows a compositional bias: basic and acidic residues; it reads RHRETTPDVDGDVK. The region spanning 915 to 1025 is the BRCT 2 domain; sequence DPDVIFKHLC…TLLDEEGESF (111 aa).

The protein belongs to the ATP-dependent DNA ligase family. Requires Mg(2+) as cofactor.

The protein localises to the nucleus. The enzyme catalyses ATP + (deoxyribonucleotide)n-3'-hydroxyl + 5'-phospho-(deoxyribonucleotide)m = (deoxyribonucleotide)n+m + AMP + diphosphate.. DNA ligase involved in DNA non-homologous end joining (NHEJ); required for double-strand break (DSB) repair. The protein is DNA ligase 4 (LIG4) of Coprinopsis cinerea (strain Okayama-7 / 130 / ATCC MYA-4618 / FGSC 9003) (Inky cap fungus).